Consider the following 106-residue polypeptide: ATP-dependent Clp protease adapter protein ClpS (106 aa).

Belongs to the ClpS family. As to quaternary structure, binds to the N-terminal domain of the chaperone ClpA.

Its function is as follows. Involved in the modulation of the specificity of the ClpAP-mediated ATP-dependent protein degradation. This Vibrio atlanticus (strain LGP32) (Vibrio splendidus (strain Mel32)) protein is ATP-dependent Clp protease adapter protein ClpS.